We begin with the raw amino-acid sequence, 453 residues long: tRNA modification GTPase MnmE (453 aa).

The (6S)-5-formyl-5,6,7,8-tetrahydrofolate site is built by Arg22, Glu79, and Lys119. The TrmE-type G domain maps to 215-376 (GMKVVIAGRP…LRNHLKECMG (162 aa)). Asn225 contacts K(+). GTP is bound by residues 225-230 (NAGKSS), 244-250 (TDIAGTT), 269-272 (DTAG), and 334-337 (NKAD). Ser229 contacts Mg(2+). K(+) is bound by residues Thr244, Ile246, and Thr249. Thr250 contacts Mg(2+). Lys453 lines the (6S)-5-formyl-5,6,7,8-tetrahydrofolate pocket.

This sequence belongs to the TRAFAC class TrmE-Era-EngA-EngB-Septin-like GTPase superfamily. TrmE GTPase family. As to quaternary structure, homodimer. Heterotetramer of two MnmE and two MnmG subunits. K(+) is required as a cofactor.

It is found in the cytoplasm. In terms of biological role, exhibits a very high intrinsic GTPase hydrolysis rate. Involved in the addition of a carboxymethylaminomethyl (cmnm) group at the wobble position (U34) of certain tRNAs, forming tRNA-cmnm(5)s(2)U34. This is tRNA modification GTPase MnmE from Vibrio vulnificus (strain CMCP6).